The primary structure comprises 63 residues: Large ribosomal subunit protein uL29 (63 aa).

Belongs to the universal ribosomal protein uL29 family.

This chain is Large ribosomal subunit protein uL29, found in Haemophilus influenzae (strain 86-028NP).